A 958-amino-acid polypeptide reads, in one-letter code: Glycine dehydrogenase (decarboxylating) (958 aa).

Residue K707 is modified to N6-(pyridoxal phosphate)lysine.

It belongs to the GcvP family. The glycine cleavage system is composed of four proteins: P, T, L and H. Pyridoxal 5'-phosphate serves as cofactor.

The enzyme catalyses N(6)-[(R)-lipoyl]-L-lysyl-[glycine-cleavage complex H protein] + glycine + H(+) = N(6)-[(R)-S(8)-aminomethyldihydrolipoyl]-L-lysyl-[glycine-cleavage complex H protein] + CO2. Its function is as follows. The glycine cleavage system catalyzes the degradation of glycine. The P protein binds the alpha-amino group of glycine through its pyridoxal phosphate cofactor; CO(2) is released and the remaining methylamine moiety is then transferred to the lipoamide cofactor of the H protein. The polypeptide is Glycine dehydrogenase (decarboxylating) (Stutzerimonas stutzeri (strain A1501) (Pseudomonas stutzeri)).